We begin with the raw amino-acid sequence, 409 residues long: Nucleoprotein (409 aa).

4 disordered regions span residues 1–32, 46–69, 120–193, and 238–259; these read MASG…SSGN, SPPL…QQHG, GADT…SGAE, and VDQV…DKMN. The segment covering 15–31 has biased composition (low complexity); it reads PVIKLGGPKPPKVGSSG. Residues 29–160 are RNA-binding; sequence SSGNASWFQA…GNFRWDFIPL (132 aa). One can recognise a CoV N NTD domain in the interval 31-156; it reads GNASWFQAIK…GGPDGNFRWD (126 aa). A compositionally biased stretch (low complexity) spans 162-179; it reads RGRSGKSTAASSAASSRA. Composition is skewed to basic and acidic residues over residues 180–192 and 247–259; these read PSRE…RSGA and KGKE…DKMN. Serine 190 carries the post-translational modification Phosphoserine; by host. The CoV N CTD domain occupies 215 to 331; the sequence is TKAKADEMAH…QCVDGVGTRP (117 aa). A dimerization region spans residues 226–333; it reads RYCKRTIPPG…VDGVGTRPKD (108 aa). Cysteine 320 and cysteine 323 are oxidised to a cystine. Positions 327-409 are disordered; the sequence is VGTRPKDDEP…GDSALGENEL (83 aa). The segment covering 341-354 has biased composition (low complexity); the sequence is RSSSRPATRTSSPA. A compositionally biased stretch (basic residues) spans 358–367; that stretch reads PRPKKEKKTK. The span at 368–384 shows a compositional bias: basic and acidic residues; sequence KQDDEVDKALTSDEERN. Threonine 378 carries the post-translational modification Phosphothreonine; by host. The residue at position 379 (serine 379) is a Phosphoserine; by host.

This sequence belongs to the gammacoronavirus nucleocapsid protein family. Homooligomer. Both monomeric and oligomeric forms interact with RNA. Interacts with protein M. Interacts with NSP3; this interaction serves to tether the genome to the newly translated replicase-transcriptase complex at a very early stage of infection. In terms of processing, ADP-ribosylated. The ADP-ribosylation is retained in the virion during infection. Phosphorylated on serine and threonine residues.

It localises to the virion. The protein localises to the host endoplasmic reticulum-Golgi intermediate compartment. Its subcellular location is the host Golgi apparatus. Functionally, packages the positive strand viral genome RNA into a helical ribonucleocapsid (RNP) and plays a fundamental role during virion assembly through its interactions with the viral genome and membrane protein M. Plays an important role in enhancing the efficiency of subgenomic viral RNA transcription as well as viral replication. The protein is Nucleoprotein of Gallus gallus (Chicken).